Consider the following 547-residue polypeptide: Tripartite motif-containing protein 5 (547 aa).

A2 is subject to N-acetylalanine. An RING-type zinc finger spans residues C15–R59. At S86 the chain carries Phosphoserine. The B box-type zinc-finger motif lies at Q91–V132. Residues C96, H99, C118, and H124 each contribute to the Zn(2+) site. Residues V132 to Q225 adopt a coiled-coil conformation. Positions F186–N199 are required for interaction with GABARAP and for autophagy. A B30.2/SPRY domain is found at P280–S547.

It belongs to the TRIM/RBCC family. Can form homodimers and homotrimers. In addition to lower-order dimerization, also exhibits a higher-order multimerization and both low- and high-order multimerizations are essential for its restriction activity. Interacts with BTBD1 and BTBD2. Interacts with PSMC4, PSMC5, PSMD7 and HSPA8/HSC70. Interacts (via B30.2/SPRY domain) with HSPA1A/B. Interacts with PSMC2, MAP3K7/TAK1, TAB2 and TAB3. Interacts with SQSTM1. Interacts with TRIM6 and TRIM34. Interacts with ULK1 (phosphorylated form), GABARAP, GABARAPL1, GABARAPL2, MAP1LC3A, MAP1LC3C and BECN1. Degraded in a proteasome-independent fashion in the absence of viral infection but in a proteasome-dependent fashion following exposure to restriction sensitive virus. Post-translationally, autoubiquitinated in a RING finger- and UBE2D2-dependent manner. Monoubiquitinated by TRIM21. Deubiquitinated by Yersinia YopJ. Ubiquitination may not lead to proteasomal degradation.

The protein localises to the cytoplasm. Its subcellular location is the nucleus. It catalyses the reaction S-ubiquitinyl-[E2 ubiquitin-conjugating enzyme]-L-cysteine + [acceptor protein]-L-lysine = [E2 ubiquitin-conjugating enzyme]-L-cysteine + N(6)-ubiquitinyl-[acceptor protein]-L-lysine.. It functions in the pathway protein modification; protein ubiquitination. In terms of biological role, capsid-specific restriction factor that prevents infection from non-host-adapted retroviruses. Blocks viral replication early in the life cycle, after viral entry but before reverse transcription. In addition to acting as a capsid-specific restriction factor, also acts as a pattern recognition receptor that activates innate immune signaling in response to the retroviral capsid lattice. Binding to the viral capsid triggers its E3 ubiquitin ligase activity, and in concert with the heterodimeric ubiquitin conjugating enzyme complex UBE2V1-UBE2N (also known as UBC13-UEV1A complex) generates 'Lys-63'-linked polyubiquitin chains, which in turn are catalysts in the autophosphorylation of the MAP3K7/TAK1 complex (includes TAK1, TAB2, and TAB3). Activation of the MAP3K7/TAK1 complex by autophosphorylation results in the induction and expression of NF-kappa-B and MAPK-responsive inflammatory genes, thereby leading to an innate immune response in the infected cell. Plays a role in regulating autophagy through activation of autophagy regulator BECN1 by causing its dissociation from its inhibitors BCL2 and TAB2. This Ateles geoffroyi (Black-handed spider monkey) protein is Tripartite motif-containing protein 5 (TRIM5).